Consider the following 1044-residue polypeptide: Pre-mRNA-splicing factor ATP-dependent RNA helicase DHX16 (1044 aa).

2 disordered regions span residues 101–210 (EDSE…AYEE) and 374–394 (LQGN…QKES). Residues serine 103, serine 106, and serine 107 each carry the phosphoserine modification. A compositionally biased stretch (basic residues) spans 119–130 (QKKRKKRKHLRK). Residues 134 to 143 (EEEEEEEEEA) show a composition bias toward acidic residues. Serine 163 carries the phosphoserine modification. Residues 169–210 (RTERERLQDLEERDAFAERVRQRDKDRTRNVLERSDKKAYEE) are compositionally biased toward basic and acidic residues. The region spanning 412 to 576 (LAAIANHQVL…FDDAPVFRIP (165 aa)) is the Helicase ATP-binding domain. 425-432 (GETGSGKT) contributes to the ATP binding site. The short motif at 523–526 (DEAH) is the DEAH box element. The Helicase C-terminal domain maps to 601–774 (SVLQIHVTQP…NVVLLLKSLG (174 aa)). Position 715 is a phosphothreonine (threonine 715).

It belongs to the DEAD box helicase family. DEAH subfamily. DDX16/PRP8 sub-subfamily. Component of pre-catalytic spliceosome complexes. Component of the minor spliceosome, which splices U12-type introns. Interacts with GPKOW. Interacts with TRIM6. Interacts with RIGI.

It localises to the nucleus. The protein resides in the nucleoplasm. It is found in the cytoplasm. It catalyses the reaction ATP + H2O = ADP + phosphate + H(+). Functionally, required for pre-mRNA splicing as a component of the spliceosome. Contributes to pre-mRNA splicing after spliceosome formation and prior to the first transesterification reaction. As a component of the minor spliceosome, involved in the splicing of U12-type introns in pre-mRNAs. Also plays a role in innate antiviral response by acting as a pattern recognition receptor sensing splicing signals in viral RNA. Mechanistically, TRIM6 promotes the interaction between unanchored 'Lys-48'-polyubiquitin chains and DHX16, leading to DHX16 interaction with RIGI and ssRNA to amplify RIGI-dependent innate antiviral immune responses. This is Pre-mRNA-splicing factor ATP-dependent RNA helicase DHX16 (DHX16) from Pan troglodytes (Chimpanzee).